A 347-amino-acid polypeptide reads, in one-letter code: Phosphoribosylformylglycinamidine cyclo-ligase (347 aa).

It belongs to the AIR synthase family.

Its subcellular location is the cytoplasm. It catalyses the reaction 2-formamido-N(1)-(5-O-phospho-beta-D-ribosyl)acetamidine + ATP = 5-amino-1-(5-phospho-beta-D-ribosyl)imidazole + ADP + phosphate + H(+). It participates in purine metabolism; IMP biosynthesis via de novo pathway; 5-amino-1-(5-phospho-D-ribosyl)imidazole from N(2)-formyl-N(1)-(5-phospho-D-ribosyl)glycinamide: step 2/2. This is Phosphoribosylformylglycinamidine cyclo-ligase from Yersinia pestis.